Reading from the N-terminus, the 461-residue chain is Bifunctional protein GlmU (461 aa).

Residues M1–R232 are pyrophosphorylase. UDP-N-acetyl-alpha-D-glucosamine-binding positions include L8–G11, K22, Q73, and G78–T79. Position 102 (D102) interacts with Mg(2+). Residues G142, E157, and N230 each coordinate UDP-N-acetyl-alpha-D-glucosamine. N230 is a binding site for Mg(2+). Residues Q233–K253 are linker. Positions G254–D461 are N-acetyltransferase. UDP-N-acetyl-alpha-D-glucosamine-binding residues include R336 and K354. Catalysis depends on H366, which acts as the Proton acceptor. 2 residues coordinate UDP-N-acetyl-alpha-D-glucosamine: Y369 and N380. Acetyl-CoA contacts are provided by residues A383, N389–Y390, S408, and A426.

In the N-terminal section; belongs to the N-acetylglucosamine-1-phosphate uridyltransferase family. This sequence in the C-terminal section; belongs to the transferase hexapeptide repeat family. Homotrimer. The cofactor is Mg(2+).

The protein resides in the cytoplasm. The catalysed reaction is alpha-D-glucosamine 1-phosphate + acetyl-CoA = N-acetyl-alpha-D-glucosamine 1-phosphate + CoA + H(+). It catalyses the reaction N-acetyl-alpha-D-glucosamine 1-phosphate + UTP + H(+) = UDP-N-acetyl-alpha-D-glucosamine + diphosphate. Its pathway is nucleotide-sugar biosynthesis; UDP-N-acetyl-alpha-D-glucosamine biosynthesis; N-acetyl-alpha-D-glucosamine 1-phosphate from alpha-D-glucosamine 6-phosphate (route II): step 2/2. It functions in the pathway nucleotide-sugar biosynthesis; UDP-N-acetyl-alpha-D-glucosamine biosynthesis; UDP-N-acetyl-alpha-D-glucosamine from N-acetyl-alpha-D-glucosamine 1-phosphate: step 1/1. It participates in bacterial outer membrane biogenesis; LPS lipid A biosynthesis. Functionally, catalyzes the last two sequential reactions in the de novo biosynthetic pathway for UDP-N-acetylglucosamine (UDP-GlcNAc). The C-terminal domain catalyzes the transfer of acetyl group from acetyl coenzyme A to glucosamine-1-phosphate (GlcN-1-P) to produce N-acetylglucosamine-1-phosphate (GlcNAc-1-P), which is converted into UDP-GlcNAc by the transfer of uridine 5-monophosphate (from uridine 5-triphosphate), a reaction catalyzed by the N-terminal domain. This Legionella pneumophila subsp. pneumophila (strain Philadelphia 1 / ATCC 33152 / DSM 7513) protein is Bifunctional protein GlmU.